A 152-amino-acid chain; its full sequence is Methylglyoxal synthase (152 aa).

Positions 5 to 152 (TRTVQAQKHI…YQLYLQQRLK (148 aa)) constitute an MGS-like domain. Substrate-binding positions include H19, K23, 45 to 48 (TGTT), and 65 to 66 (SG). The active-site Proton donor/acceptor is the D71. H98 serves as a coordination point for substrate.

It belongs to the methylglyoxal synthase family.

The enzyme catalyses dihydroxyacetone phosphate = methylglyoxal + phosphate. In terms of biological role, catalyzes the formation of methylglyoxal from dihydroxyacetone phosphate. In Erwinia tasmaniensis (strain DSM 17950 / CFBP 7177 / CIP 109463 / NCPPB 4357 / Et1/99), this protein is Methylglyoxal synthase.